The primary structure comprises 458 residues: Ammonium transporter Rh type B (458 aa).

The Cytoplasmic segment spans residues 1–13 (MAGSPSRAAGRRL). Residues 14-34 (QLPLLCLFLQGATAVLFAVFV) traverse the membrane as a helical segment. The Extracellular segment spans residues 35–61 (RYNHKTDAALWHRGNYSNADNEFYFRY). An N-linked (GlcNAc...) asparagine glycan is attached at Asn-49. Residues 62 to 82 (PSFQDVHAMVFVGFGFLMVFL) traverse the membrane as a helical segment. Residues 83–86 (QRYG) are Cytoplasmic-facing. A helical membrane pass occupies residues 87–107 (FSSVGFTFLLAAFALQWSTLV). Residues 108–124 (QGFLHSFHSGHIHVGVE) are Extracellular-facing. The helical transmembrane segment at 125–145 (SMINADFCAGAVLISFGAVLG) threads the bilayer. Residues 146–149 (KTGP) lie on the Cytoplasmic side of the membrane. Residues 150 to 170 (AQLLLMALLEVVLFGINEFVL) traverse the membrane as a helical segment. Residues 171–178 (LHLLGVRD) are Extracellular-facing. A helical transmembrane segment spans residues 179–201 (AGGSMTIHTFGAYFGLVLSRVLY). The Cytoplasmic segment spans residues 202-219 (RPQLEKSKHRQGSVYHSD). The helical transmembrane segment at 220 to 240 (LFAMIGTIFLWIFWPSFNSAL) threads the bilayer. The Extracellular portion of the chain corresponds to 241 to 251 (TALGAGQHRTA). The chain crosses the membrane as a helical span at residues 252–272 (LNTYYSLAASTLGTFALSALV). Over 273–282 (GEDGRLDMVH) the chain is Cytoplasmic. A helical membrane pass occupies residues 283 to 303 (IQNAALAGGVVVGTSSEMMLT). A topological domain (extracellular) is located at residue Pro-304. Residues 305-325 (FGALAAGFLAGTVSTLGYKFF) form a helical membrane-spanning segment. The Cytoplasmic portion of the chain corresponds to 326–346 (TPILESKFKVQDTCGVHNLHG). A helical transmembrane segment spans residues 347-367 (MPGVLGALLGVLVAGLATHEA). The Extracellular portion of the chain corresponds to 368 to 393 (YGDGLESVFPLIAEGQRSATSQAMLQ). Residues 394–414 (LFGLFVTLMFASVGGGLGGLL) traverse the membrane as a helical segment. The Cytoplasmic portion of the chain corresponds to 415 to 458 (LKLPFLDSPPDSQCYEDQVHWQVPGEHEDEAQRPLRVEEADTQA). The interaction with ANK3 stretch occupies residues 416–424 (KLPFLDSPP). Positions 429-432 (YEDQ) match the Basolateral sorting signal motif. Residues 439–458 (GEHEDEAQRPLRVEEADTQA) are disordered. Residues 444–458 (EAQRPLRVEEADTQA) are compositionally biased toward basic and acidic residues.

It belongs to the ammonium transporter (TC 2.A.49) family. Rh subfamily. As to quaternary structure, interacts (via C-terminus) with ANK2 and ANK3; required for targeting to the basolateral membrane. In terms of processing, N-glycosylated.

It is found in the cell membrane. It localises to the basolateral cell membrane. It carries out the reaction NH4(+)(in) = NH4(+)(out). The catalysed reaction is methylamine(out) = methylamine(in). The enzyme catalyses CO2(out) = CO2(in). In terms of biological role, ammonium transporter involved in the maintenance of acid-base homeostasis. Transports ammonium and its related derivative methylammonium across the basolateral plasma membrane of epithelial cells likely contributing to renal transepithelial ammonia transport and ammonia metabolism. May transport either NH4(+) or NH3 ammonia species predominantly mediating an electrogenic NH4(+) transport. May act as a CO2 channel providing for renal acid secretion. The polypeptide is Ammonium transporter Rh type B (RHBG) (Papio hamadryas (Hamadryas baboon)).